Here is a 21-residue protein sequence, read N- to C-terminus: thr operon leader peptide (21 aa).

It belongs to the thr operon leader peptide family.

This protein is involved in control of the biosynthesis of threonine. The protein is thr operon leader peptide of Shigella boydii serotype 18 (strain CDC 3083-94 / BS512).